Here is a 157-residue protein sequence, read N- to C-terminus: Probable succinate transporter subunit YjjB (157 aa).

A run of 5 helical transmembrane segments spans residues 8 to 28, 34 to 54, 55 to 75, 87 to 107, and 129 to 149; these read LALM…AMVF, ALPW…LMMS, AGFN…SIGI, VFTV…TAMI, and FLKA…PGLW.

This sequence belongs to the ThrE exporter (TC 2.A.79) family. As to quaternary structure, the transporter is composed of YjjB and YjjP.

It is found in the cell inner membrane. In terms of biological role, involved in succinate export with YjjP. Both proteins are required for export. The chain is Probable succinate transporter subunit YjjB from Salmonella typhi.